The following is a 359-amino-acid chain: C-X-C chemokine receptor type 2 (359 aa).

At 1–47 the chain is on the extracellular side; it reads MGEFKVDKFNIEDFFSGDLDIFNYSSGMPSILPDAVPCHSENLEINS. Asn-23 carries an N-linked (GlcNAc...) asparagine glycan. Residues 48–74 traverse the membrane as a helical segment; the sequence is YAVVVIYVLVTLLSLVGNSLVMLVILY. Over 75-83 the chain is Cytoplasmic; the sequence is NRSTCSVTD. Residues 84–104 traverse the membrane as a helical segment; the sequence is VYLLNLAIADLFFALTLPVWA. Residues 105-119 lie on the Extracellular side of the membrane; sequence ASKVNGWTFGSTLCK. Cys-118 and Cys-195 are disulfide-bonded. The helical transmembrane segment at 120 to 141 threads the bilayer; sequence IFSYVKEVTFYSSVLLLACISM. The Cytoplasmic portion of the chain corresponds to 142 to 162; that stretch reads DRYLAIVHATSTLIQKRHLVK. A helical transmembrane segment spans residues 163 to 182; the sequence is FVCIAMWLLSVILALPILIL. Topologically, residues 183-207 are extracellular; that stretch reads RNPVKVNLSTLVCYEDVGNNTSRLR. A helical membrane pass occupies residues 208–230; it reads VVLRILPQTFGFLVPLLIMLFCY. Topologically, residues 231-250 are cytoplasmic; that stretch reads GFTLRTLFKAHMGQKHRAMR. The chain crosses the membrane as a helical span at residues 251-272; that stretch reads VIFAVVLVFLLCWLPYNLVLFT. The Extracellular segment spans residues 273 to 293; the sequence is DTLMRTKLIKETCERRDDIDK. The chain crosses the membrane as a helical span at residues 294 to 314; the sequence is ALNATEILGFLHSCLNPIIYA. The Cytoplasmic segment spans residues 315–359; it reads FIGQKFRHGLLKIMATYGLVSKEFLAKEGRPSFVSSSSANTSTTL.

The protein belongs to the G-protein coupled receptor 1 family. As to quaternary structure, interacts with IL8. Interacts with GNAI2. In terms of processing, phosphorylated upon ligand binding; which is required for desensitization.

The protein resides in the cell membrane. Receptor for interleukin-8 which is a powerful neutrophil chemotactic factor. Binding of IL-8 to the receptor causes activation of neutrophils. This response is mediated via a G-protein that activates a phosphatidylinositol-calcium second messenger system. Binds to IL-8 with high affinity. Also binds with high affinity to CXCL3, GRO/MGSA and NAP-2. This chain is C-X-C chemokine receptor type 2 (Cxcr2), found in Mus musculus (Mouse).